The sequence spans 325 residues: Glutarate 2-hydroxylase (325 aa).

Fe cation-binding residues include His-160, Asp-162, and His-292.

This sequence belongs to the glutarate hydroxylase family. In terms of assembly, homotetramer. Requires Fe(2+) as cofactor.

It catalyses the reaction glutarate + 2-oxoglutarate + O2 = (S)-2-hydroxyglutarate + succinate + CO2. It participates in amino-acid degradation. Acts as an alpha-ketoglutarate-dependent dioxygenase catalyzing hydroxylation of glutarate (GA) to L-2-hydroxyglutarate (L2HG). Functions in a L-lysine degradation pathway that proceeds via cadaverine, glutarate and L-2-hydroxyglutarate. The chain is Glutarate 2-hydroxylase from Klebsiella pneumoniae (strain 342).